The primary structure comprises 288 residues: Pantothenate synthetase (288 aa).

30 to 37 (MGALHEGH) lines the ATP pocket. His-37 serves as the catalytic Proton donor. Gln-61 lines the (R)-pantoate pocket. Gln-61 provides a ligand contact to beta-alanine. 147–150 (GEKD) is an ATP binding site. Position 153 (Gln-153) interacts with (R)-pantoate. ATP contacts are provided by residues Val-176 and 184–187 (ISSR).

The protein belongs to the pantothenate synthetase family. Homodimer.

Its subcellular location is the cytoplasm. It catalyses the reaction (R)-pantoate + beta-alanine + ATP = (R)-pantothenate + AMP + diphosphate + H(+). It functions in the pathway cofactor biosynthesis; (R)-pantothenate biosynthesis; (R)-pantothenate from (R)-pantoate and beta-alanine: step 1/1. Functionally, catalyzes the condensation of pantoate with beta-alanine in an ATP-dependent reaction via a pantoyl-adenylate intermediate. This Chlorobium phaeobacteroides (strain BS1) protein is Pantothenate synthetase.